Reading from the N-terminus, the 501-residue chain is Xylulose kinase (501 aa).

Residue 81 to 82 participates in substrate binding; the sequence is MH. Asp239 (proton acceptor) is an active-site residue.

The protein belongs to the FGGY kinase family.

It catalyses the reaction D-xylulose + ATP = D-xylulose 5-phosphate + ADP + H(+). In terms of biological role, catalyzes the phosphorylation of D-xylulose to D-xylulose 5-phosphate. The protein is Xylulose kinase of Lactococcus lactis subsp. lactis (strain IL1403) (Streptococcus lactis).